A 346-amino-acid polypeptide reads, in one-letter code: Ribosomal RNA small subunit methyltransferase H (346 aa).

S-adenosyl-L-methionine is bound by residues 47–49, D65, F92, D113, and Q120; that span reads GGY. The span at 270-279 shows a compositional bias: basic and acidic residues; it reads RGEAPSRRLP. Residues 270–346 form a disordered region; that stretch reads RGEAPSRRLP…ALPQRAAKGR (77 aa).

This sequence belongs to the methyltransferase superfamily. RsmH family.

It localises to the cytoplasm. The catalysed reaction is cytidine(1402) in 16S rRNA + S-adenosyl-L-methionine = N(4)-methylcytidine(1402) in 16S rRNA + S-adenosyl-L-homocysteine + H(+). In terms of biological role, specifically methylates the N4 position of cytidine in position 1402 (C1402) of 16S rRNA. The protein is Ribosomal RNA small subunit methyltransferase H of Methylocella silvestris (strain DSM 15510 / CIP 108128 / LMG 27833 / NCIMB 13906 / BL2).